Here is a 734-residue protein sequence, read N- to C-terminus: MALRFPRFSQGLAQDPTTRRIWFGIATAHDFESHDDITEERLYQNIFASHFGQLAIIFLWTSGNLFHVAWQGNFEAWVQDPLHVRPIAHAIWDPHFGQPAVEAFTRGGALGPVNIAYSGVYQWWYTIGLRTNGDLYSGALFLLFLSAISLLAGWLHLQPKWKPSVSWFKNAESRLNHHLSGLFGVSSLAWTGHLVHVAIPGSRGEYVRWNNFLSILPHPQGLGPLFTGQWNLYAQNPDSSSHLFGTSQGAGTAILTLLGGFHPQTQSLWLTDMAHHHLAIAILFLLAGHMYRTNFGIGHSIKDLLEAHIPPGGRLGRGHKGLYDTINNSIHFQLGLALASLGVITSLVAQHMYSLPAYAFIAQDYTTQAALYTHHQYIAGFIMTGAFAHGAIFFIRDYNPEQNEDNVLARMLDHKEAIISHLSWASLFLGFHTLGLYVHNDVMLAFGTPEKQILIEPIFAQWIQSAHGKTSYGFDVLLSSTNSPAFNAGRSIWLPGWLNAINENSNSLFLTIGPGDFLVHHAIALGLHTTTLILVKGALDARGSKLMPDKKDFGYSFPCDGPGRGGTCDISAWDAFYLAVFWMLNTIGWVTFYWHWKHITLWQGNVSQFNESSTYLMGWLRDYLWLNSSQLINGYNPFGMNSLSVWAWMFLFGHLVWATGFMFLISWRGYWQELIETLAWAHERTPLANLIRWRDKPVALSIVQARLVGLAHFSVGYIFTYAAFLIASTSGKFG.

8 helical membrane passes run 46–69 (IFAS…FHVA), 135–158 (LYSG…LHLQ), 175–199 (LNHH…HVAI), 273–291 (MAHH…GHMY), 330–353 (IHFQ…QHMY), 369–395 (AALY…IFFI), 417–439 (AIIS…LYVH), and 517–535 (FLVH…LILV). Residues cysteine 559 and cysteine 568 each contribute to the [4Fe-4S] cluster site. 2 helical membrane-spanning segments follow: residues 575–596 (AFYL…YWHW) and 643–665 (LSVW…MFLI). Positions 654, 662, and 670 each coordinate chlorophyll a. Residue tryptophan 671 coordinates phylloquinone. A helical transmembrane segment spans residues 707-727 (LVGLAHFSVGYIFTYAAFLIA).

It belongs to the PsaA/PsaB family. As to quaternary structure, the PsaA/B heterodimer binds the P700 chlorophyll special pair and subsequent electron acceptors. PSI consists of a core antenna complex that captures photons, and an electron transfer chain that converts photonic excitation into a charge separation. The eukaryotic PSI reaction center is composed of at least 11 subunits. The cofactor is P700 is a chlorophyll a/chlorophyll a' dimer, A0 is one or more chlorophyll a, A1 is one or both phylloquinones and FX is a shared 4Fe-4S iron-sulfur center..

Its subcellular location is the plastid. It localises to the chloroplast thylakoid membrane. The enzyme catalyses reduced [plastocyanin] + hnu + oxidized [2Fe-2S]-[ferredoxin] = oxidized [plastocyanin] + reduced [2Fe-2S]-[ferredoxin]. Functionally, psaA and PsaB bind P700, the primary electron donor of photosystem I (PSI), as well as the electron acceptors A0, A1 and FX. PSI is a plastocyanin-ferredoxin oxidoreductase, converting photonic excitation into a charge separation, which transfers an electron from the donor P700 chlorophyll pair to the spectroscopically characterized acceptors A0, A1, FX, FA and FB in turn. Oxidized P700 is reduced on the lumenal side of the thylakoid membrane by plastocyanin. This Lotus japonicus (Lotus corniculatus var. japonicus) protein is Photosystem I P700 chlorophyll a apoprotein A2.